The sequence spans 511 residues: Ribonuclease Y (511 aa).

A helical transmembrane segment spans residues 2–22; it reads ITTVIIAIVCFAVGGGLSYML. The KH domain occupies 201–261; that stretch reads SVTVFHIESD…VRREIARLAL (61 aa). One can recognise an HD domain in the interval 327–420; sequence LLQHARETAN…VQVCDAISGA (94 aa).

Belongs to the RNase Y family.

The protein resides in the cell membrane. Its function is as follows. Endoribonuclease that initiates mRNA decay. This is Ribonuclease Y from Phocaeicola vulgatus (strain ATCC 8482 / DSM 1447 / JCM 5826 / CCUG 4940 / NBRC 14291 / NCTC 11154) (Bacteroides vulgatus).